A 442-amino-acid chain; its full sequence is D-serine dehydratase (442 aa).

Lysine 118 carries the post-translational modification N6-(pyridoxal phosphate)lysine.

It belongs to the serine/threonine dehydratase family. DsdA subfamily. In terms of assembly, monomer. The cofactor is pyridoxal 5'-phosphate.

It catalyses the reaction D-serine = pyruvate + NH4(+). This chain is D-serine dehydratase, found in Escherichia coli (strain K12 / MC4100 / BW2952).